Here is a 668-residue protein sequence, read N- to C-terminus: DNA ligase (668 aa).

Residues 35–39, 84–85, and E115 each bind NAD(+); these read DQEYD and SL. K117 acts as the N6-AMP-lysine intermediate in catalysis. Positions 138, 172, 288, and 312 each coordinate NAD(+). Positions 406, 409, 425, and 430 each coordinate Zn(2+). Residues 589–668 enclose the BRCT domain; sequence KLEGPLKGLV…EEFFDKYGES (80 aa).

Belongs to the NAD-dependent DNA ligase family. LigA subfamily. It depends on Mg(2+) as a cofactor. Mn(2+) serves as cofactor.

The enzyme catalyses NAD(+) + (deoxyribonucleotide)n-3'-hydroxyl + 5'-phospho-(deoxyribonucleotide)m = (deoxyribonucleotide)n+m + AMP + beta-nicotinamide D-nucleotide.. DNA ligase that catalyzes the formation of phosphodiester linkages between 5'-phosphoryl and 3'-hydroxyl groups in double-stranded DNA using NAD as a coenzyme and as the energy source for the reaction. It is essential for DNA replication and repair of damaged DNA. This Petrotoga mobilis (strain DSM 10674 / SJ95) protein is DNA ligase.